Consider the following 570-residue polypeptide: MFS-type transporter ptmT (570 aa).

Positions 1-11 are enriched in polar residues; the sequence is MPDSGNIQLDT. Residues 1–34 are disordered; the sequence is MPDSGNIQLDTLQHKDHSQETTSHYEGGSQLPEQ. 14 helical membrane passes run 50–70, 94–114, 121–141, 151–171, 182–202, 210–230, 247–267, 278–298, 323–343, 356–376, 379–399, 413–433, 445–465, and 517–537; these read GLIR…CVGL, WYVS…GKIY, WTYL…AITP, AISG…LSNI, AFIG…GGVF, WCFY…FLFM, GLDW…LLAL, NVRI…WLLI, IYTI…PIWF, IMNL…SVLI, VGYM…GAGL, IGYQ…PLLV, VATA…SAIA, and VTHT…GAFI. N-linked (GlcNAc...) asparagine glycosylation is present at asparagine 541. Positions 550–570 are disordered; that stretch reads PEPLVPGGSHSGAERDSKNGT. Basic and acidic residues predominate over residues 561-570; the sequence is GAERDSKNGT.

This sequence belongs to the major facilitator superfamily. TCR/Tet family.

It is found in the cell membrane. Functionally, MFS-type transporter; part of the gene cluster that mediates the biosynthesis of the indole diterpenes penitrems. May be involved in the efflux of penitrems. This is MFS-type transporter ptmT from Penicillium ochrochloron.